A 275-amino-acid polypeptide reads, in one-letter code: Release factor glutamine methyltransferase (275 aa).

S-adenosyl-L-methionine-binding positions include 114–118 (GTGSG), Asp-137, Trp-165, and Asn-180. Residue 180–183 (NPPY) participates in substrate binding.

This sequence belongs to the protein N5-glutamine methyltransferase family. PrmC subfamily.

The enzyme catalyses L-glutaminyl-[peptide chain release factor] + S-adenosyl-L-methionine = N(5)-methyl-L-glutaminyl-[peptide chain release factor] + S-adenosyl-L-homocysteine + H(+). Functionally, methylates the class 1 translation termination release factors RF1/PrfA and RF2/PrfB on the glutamine residue of the universally conserved GGQ motif. The sequence is that of Release factor glutamine methyltransferase from Xylella fastidiosa (strain Temecula1 / ATCC 700964).